An 810-amino-acid polypeptide reads, in one-letter code: MTKRTLGYSYPIALTISLVPALTPAIVQAAPLTPPPATGILDGLCYDYVPKIEKLAPGKDANAQPVEVDADRLEAKQGGTAVYQGDVKVRQGVRKFDSDYAELDQKSRDVIAIGNIYYNDGQITVTSDKTLKSNLDTKNSELEEGKYQVHGSPVRGSADRVTMTNNNQNITLEGAQYTTCPPGQEVWTLKAGSIDIDQTEVFGEAWNASLWLYDYPVFYFPYINFPIKDERKTGLLYPGYTQSSKNGMDITQPFYWNIAPNYDATITSRFMDRRGLMEQVQFRYMPDPAHVGSLYFENLANDKQYDETPSLNQAMSDGHRYLLNANHTSLFADNAMRVSLDYTKVRDRDYNYFNDFSPKVGTQVENQLQQSLMAGYFQPNWNINTEVRTYQILLASAQQPHELMPRIDHNYYQQGSWYDLAWNTEITKFGYNNAQAIAQNQGGAYTGTRVYTAPTLTMPLINEAGYYLDSQYKLMYTRYDQEVPDNMSQTFVSRFTPENGNGVTLDEGIITRTLPSFRLKGGMTFERNQNWFGGDANQTLEPEFQYLYVPYKNQDNIGVYDSTSMRQDYYSLFSDRRYAGLDRISDSNRVSIGLTSRVYDEAGDERIRLAVAQAFDFVAPRVKLYPSETLTTNTRSPLSFEGDAKINEQWFAHAGAQYDVDQSRLSSANSALEYRREKLISQLNHRFVRDANYDLENKGQVTDLNQIGLLLTTPLNDQWHLYGGYYQELNQSVKSDRKVGLKYDSCCWSINFNLEWVNTPDNVTMRPTSERSLGIQFEMKGLGSVGTGSKGTSLDTEALPYIRPFNLRDQ.

Positions 1-29 (MTKRTLGYSYPIALTISLVPALTPAIVQA) are cleaved as a signal peptide.

This sequence belongs to the LptD family. In terms of assembly, component of the lipopolysaccharide transport and assembly complex. Interacts with LptE and LptA.

The protein localises to the cell outer membrane. In terms of biological role, together with LptE, is involved in the assembly of lipopolysaccharide (LPS) at the surface of the outer membrane. The protein is LPS-assembly protein LptD of Aeromonas hydrophila subsp. hydrophila (strain ATCC 7966 / DSM 30187 / BCRC 13018 / CCUG 14551 / JCM 1027 / KCTC 2358 / NCIMB 9240 / NCTC 8049).